A 267-amino-acid chain; its full sequence is Large ribosomal subunit protein uL4 (267 aa).

Belongs to the universal ribosomal protein uL4 family. Part of the 50S ribosomal subunit.

One of the primary rRNA binding proteins, this protein initially binds near the 5'-end of the 23S rRNA. It is important during the early stages of 50S assembly. It makes multiple contacts with different domains of the 23S rRNA in the assembled 50S subunit and ribosome. Its function is as follows. Forms part of the polypeptide exit tunnel. This chain is Large ribosomal subunit protein uL4, found in Saccharolobus islandicus (strain Y.N.15.51 / Yellowstone #2) (Sulfolobus islandicus).